A 436-amino-acid polypeptide reads, in one-letter code: GTPase Der (436 aa).

2 consecutive EngA-type G domains span residues 4 to 167 (PTVA…PVEE) and 175 to 351 (IRFS…ESQN). GTP contacts are provided by residues 10–17 (GRPNVGKS), 57–61 (DTGGI), 119–122 (NKVD), 181–188 (GRPNVGKS), 229–233 (DTAGM), and 294–297 (NKWD). One can recognise a KH-like domain in the interval 352 to 436 (KRIPSAVLND…PIHLIARKRK (85 aa)).

Belongs to the TRAFAC class TrmE-Era-EngA-EngB-Septin-like GTPase superfamily. EngA (Der) GTPase family. In terms of assembly, associates with the 50S ribosomal subunit.

Its function is as follows. GTPase that plays an essential role in the late steps of ribosome biogenesis. In Streptococcus pyogenes serotype M28 (strain MGAS6180), this protein is GTPase Der.